The primary structure comprises 415 residues: Squalene synthase 11 (415 aa).

The next 2 membrane-spanning stretches (helical) occupy residues 281 to 301 (AIFR…ALCF) and 392 to 412 (LIII…SNLP).

Belongs to the phytoene/squalene synthase family. The cofactor is Mg(2+). Requires Mn(2+) as cofactor.

It localises to the endoplasmic reticulum membrane. It carries out the reaction 2 (2E,6E)-farnesyl diphosphate + NADH + H(+) = squalene + 2 diphosphate + NAD(+). The enzyme catalyses 2 (2E,6E)-farnesyl diphosphate + NADPH + H(+) = squalene + 2 diphosphate + NADP(+). It participates in terpene metabolism; lanosterol biosynthesis; lanosterol from farnesyl diphosphate: step 1/3. In terms of biological role, component of the triterpene saponins (e.g. ginsenosides or panaxosides) and phytosterols biosynthetic pathways. Catalyzes the biosynthesis of squalene. This chain is Squalene synthase 11, found in Panax ginseng (Korean ginseng).